A 389-amino-acid polypeptide reads, in one-letter code: Na(+)/H(+) antiporter NhaA (389 aa).

11 consecutive transmembrane segments (helical) span residues 17–37 (ILLL…LAGL), 59–79 (LLLW…GLEV), 95–115 (SLPT…YLLF), 124–144 (VGWA…MALL), 154–174 (VFLL…IALF), 177–197 (SDLS…LVAL), 213–233 (LVLW…GVII), 261–281 (FLIL…NMSL), 287–307 (PVPV…VMLF), 328–348 (IAPV…IASL), and 363–383 (LGTL…LSKV).

It belongs to the NhaA Na(+)/H(+) (TC 2.A.33) antiporter family.

It localises to the cell inner membrane. The enzyme catalyses Na(+)(in) + 2 H(+)(out) = Na(+)(out) + 2 H(+)(in). Functionally, na(+)/H(+) antiporter that extrudes sodium in exchange for external protons. The sequence is that of Na(+)/H(+) antiporter NhaA from Shewanella sp. (strain ANA-3).